A 250-amino-acid polypeptide reads, in one-letter code: C-X-C motif chemokine 16 (250 aa).

Residues 1-24 (MPLWELWFFLLALFLAWLTPPGNG) form the signal peptide. Topologically, residues 25-200 (NEGSMAGSCP…NVGATAGTSA (176 aa)) are extracellular. 2 cysteine pairs are disulfide-bonded: Cys33/Cys63 and Cys35/Cys77. Positions 105 to 186 (VAHQQHLAPQ…AKSEARENQE (82 aa)) are disordered. Polar residues-rich tracts occupy residues 128-147 (DSSTPAQTNLPSTLQPTQKP) and 163-172 (TSETDTSTVG). The helical transmembrane segment at 201–221 (LVPVLSLLVIIFLLTGVLLYV) threads the bilayer. Topologically, residues 222 to 250 (MCKKRQEQSRQYPPDPQLHYVPVASNINT) are cytoplasmic.

The protein belongs to the intercrine alpha (chemokine CxC) family. Glycosylated.

Its subcellular location is the membrane. Functionally, induces a strong chemotactic response. Induces calcium mobilization. Binds to CXCR6/Bonzo. Also acts as a scavenger receptor on macrophages, which specifically binds to OxLDL (oxidized low density lipoprotein), suggesting that it may be involved in pathophysiology such as atherogenesis. The protein is C-X-C motif chemokine 16 (CXCL16) of Sus scrofa (Pig).